The sequence spans 247 residues: tRNA uridine(34) hydroxylase (247 aa).

Residues Thr-124–Asn-218 form the Rhodanese domain. Catalysis depends on Cys-178, which acts as the Cysteine persulfide intermediate.

This sequence belongs to the TrhO family.

The catalysed reaction is uridine(34) in tRNA + AH2 + O2 = 5-hydroxyuridine(34) in tRNA + A + H2O. In terms of biological role, catalyzes oxygen-dependent 5-hydroxyuridine (ho5U) modification at position 34 in tRNAs. The sequence is that of tRNA uridine(34) hydroxylase from Rickettsia africae (strain ESF-5).